Here is a 130-residue protein sequence, read N- to C-terminus: Small ribosomal subunit protein uS8 (130 aa).

This sequence belongs to the universal ribosomal protein uS8 family. As to quaternary structure, part of the 30S ribosomal subunit.

Functionally, one of the primary rRNA binding proteins, it binds directly to 16S rRNA central domain where it helps coordinate assembly of the platform of the 30S subunit. The chain is Small ribosomal subunit protein uS8 from Methanocella arvoryzae (strain DSM 22066 / NBRC 105507 / MRE50).